The primary structure comprises 238 residues: Ribose-5-phosphate isomerase A (238 aa).

Substrate contacts are provided by residues 30–33, 87–90, and 100–103; these read SGST, DGAD, and KGGG. The active-site Proton acceptor is the Glu-109. Lys-127 provides a ligand contact to substrate.

Belongs to the ribose 5-phosphate isomerase family. In terms of assembly, homodimer.

It carries out the reaction aldehydo-D-ribose 5-phosphate = D-ribulose 5-phosphate. The protein operates within carbohydrate degradation; pentose phosphate pathway; D-ribose 5-phosphate from D-ribulose 5-phosphate (non-oxidative stage): step 1/1. Catalyzes the reversible conversion of ribose-5-phosphate to ribulose 5-phosphate. The sequence is that of Ribose-5-phosphate isomerase A from Synechococcus sp. (strain WH7803).